A 540-amino-acid chain; its full sequence is Chaperonin GroEL (540 aa).

ATP contacts are provided by residues 30–33 (TLGP), 87–91 (DGTTT), Gly-415, and Asp-496.

It belongs to the chaperonin (HSP60) family. Forms a cylinder of 14 subunits composed of two heptameric rings stacked back-to-back. Interacts with the co-chaperonin GroES.

The protein resides in the cytoplasm. The catalysed reaction is ATP + H2O + a folded polypeptide = ADP + phosphate + an unfolded polypeptide.. Together with its co-chaperonin GroES, plays an essential role in assisting protein folding. The GroEL-GroES system forms a nano-cage that allows encapsulation of the non-native substrate proteins and provides a physical environment optimized to promote and accelerate protein folding. The sequence is that of Chaperonin GroEL from Symbiobacterium thermophilum (strain DSM 24528 / JCM 14929 / IAM 14863 / T).